Here is a 204-residue protein sequence, read N- to C-terminus: Urease accessory protein UreG (204 aa).

12-19 (GPVGSGKT) contacts GTP.

This sequence belongs to the SIMIBI class G3E GTPase family. UreG subfamily. As to quaternary structure, homodimer. UreD, UreF and UreG form a complex that acts as a GTP-hydrolysis-dependent molecular chaperone, activating the urease apoprotein by helping to assemble the nickel containing metallocenter of UreC. The UreE protein probably delivers the nickel.

The protein resides in the cytoplasm. Its function is as follows. Facilitates the functional incorporation of the urease nickel metallocenter. This process requires GTP hydrolysis, probably effectuated by UreG. This is Urease accessory protein UreG from Pseudomonas fluorescens (strain Pf0-1).